A 232-amino-acid chain; its full sequence is MAQSKRVKAITAAVVPGKTYAFEDAIKILKTATKAKFVESIDVAVRLGVDAKKSDQQVRGSTVLPAGTGKSVRVAVFAPAGAKADEALAAGAEAVGMDDLAEKMQAGDLNYDVVIATPDAMRVVGKLGTLLGPRGLMPNPKVGTVSANPGEAVKNAKSGQVRYRTDKAGIIHCTIGKASFDDEALKSNLQALLLDLVKAKPATSKGTYLQKVSVSSTMGPGVTVDQSSLSLK.

The protein belongs to the universal ribosomal protein uL1 family. In terms of assembly, part of the 50S ribosomal subunit.

In terms of biological role, binds directly to 23S rRNA. The L1 stalk is quite mobile in the ribosome, and is involved in E site tRNA release. Its function is as follows. Protein L1 is also a translational repressor protein, it controls the translation of the L11 operon by binding to its mRNA. In Xanthomonas axonopodis pv. citri (strain 306), this protein is Large ribosomal subunit protein uL1.